Consider the following 324-residue polypeptide: Beta-ketoacyl-[acyl-carrier-protein] synthase III (324 aa).

Residues cysteine 113 and histidine 251 contribute to the active site. Residues 252–256 (QANKR) are ACP-binding. Residue asparagine 281 is part of the active site.

The protein belongs to the thiolase-like superfamily. FabH family. In terms of assembly, homodimer.

It is found in the cytoplasm. The catalysed reaction is malonyl-[ACP] + acetyl-CoA + H(+) = 3-oxobutanoyl-[ACP] + CO2 + CoA. It participates in lipid metabolism; fatty acid biosynthesis. Catalyzes the condensation reaction of fatty acid synthesis by the addition to an acyl acceptor of two carbons from malonyl-ACP. Catalyzes the first condensation reaction which initiates fatty acid synthesis and may therefore play a role in governing the total rate of fatty acid production. Possesses both acetoacetyl-ACP synthase and acetyl transacylase activities. Its substrate specificity determines the biosynthesis of branched-chain and/or straight-chain of fatty acids. In Bartonella henselae (strain ATCC 49882 / DSM 28221 / CCUG 30454 / Houston 1) (Rochalimaea henselae), this protein is Beta-ketoacyl-[acyl-carrier-protein] synthase III.